A 385-amino-acid chain; its full sequence is 1-deoxy-D-xylulose 5-phosphate reductoisomerase (385 aa).

NADPH is bound by residues Thr11, Gly12, Ser13, Ile14, Gln39, and Asn117. Position 118 (Lys118) interacts with 1-deoxy-D-xylulose 5-phosphate. Glu119 provides a ligand contact to NADPH. Asp143 is a Mn(2+) binding site. Positions 144, 145, 170, and 193 each coordinate 1-deoxy-D-xylulose 5-phosphate. A Mn(2+)-binding site is contributed by Glu145. Residue Gly199 participates in NADPH binding. Ser206, Asn211, Lys212, and Glu215 together coordinate 1-deoxy-D-xylulose 5-phosphate. Glu215 contributes to the Mn(2+) binding site.

This sequence belongs to the DXR family. Mg(2+) serves as cofactor. It depends on Mn(2+) as a cofactor.

The catalysed reaction is 2-C-methyl-D-erythritol 4-phosphate + NADP(+) = 1-deoxy-D-xylulose 5-phosphate + NADPH + H(+). The protein operates within isoprenoid biosynthesis; isopentenyl diphosphate biosynthesis via DXP pathway; isopentenyl diphosphate from 1-deoxy-D-xylulose 5-phosphate: step 1/6. In terms of biological role, catalyzes the NADPH-dependent rearrangement and reduction of 1-deoxy-D-xylulose-5-phosphate (DXP) to 2-C-methyl-D-erythritol 4-phosphate (MEP). The sequence is that of 1-deoxy-D-xylulose 5-phosphate reductoisomerase from Thermomicrobium roseum (strain ATCC 27502 / DSM 5159 / P-2).